The following is a 74-amino-acid chain: DNA-directed RNA polymerase subunit omega (74 aa).

The protein belongs to the RNA polymerase subunit omega family. In terms of assembly, the RNAP catalytic core consists of 2 alpha, 1 beta, 1 beta' and 1 omega subunit. When a sigma factor is associated with the core the holoenzyme is formed, which can initiate transcription.

The enzyme catalyses RNA(n) + a ribonucleoside 5'-triphosphate = RNA(n+1) + diphosphate. Promotes RNA polymerase assembly. Latches the N- and C-terminal regions of the beta' subunit thereby facilitating its interaction with the beta and alpha subunits. This is DNA-directed RNA polymerase subunit omega from Solidesulfovibrio magneticus (strain ATCC 700980 / DSM 13731 / RS-1) (Desulfovibrio magneticus).